Reading from the N-terminus, the 491-residue chain is Tyrosine 3-monooxygenase (491 aa).

The residue at position 19 (S19) is a Phosphoserine; by CaMK2. S31 is modified (phosphoserine). Position 40 is a phosphoserine; by CaMK2 and PKA (S40). The Fe cation site is built by H324, H329, and E369. At S465 the chain carries Phosphoserine.

The protein belongs to the biopterin-dependent aromatic amino acid hydroxylase family. In terms of assembly, homotetramer. Interacts (when phosphorylated at Ser-19) with YWHAG; one YWHAG dimer bounds to one TH tetramer and this interaction may influence the phosphorylation and dephosphorylation of other sites. Interacts with NT5DC2; the interaction results in reduced phosphorylation and decreased catalytic activity of TH. Fe(2+) is required as a cofactor. Post-translationally, phosphorylated on Ser-19, Ser-31 and Ser-40 by several protein kinases with different site specificities. Phosphorylation at Ser-31 and Ser-40 leads to an increase of TH activity. Phosphorylation at Ser-40 activates the enzyme and also counteracts the feedback inhibition of TH by catecholamines. Phosphorylation of Ser-19 and Ser-31 triggers the proteasomal degradation of TH through the ubiquitin-proteasome pathway. Phosphorylation at Ser-31 facilitates transport of TH from the soma to the nerve terminals via the microtubule network. Phosphorylation at Ser-19 induces the high-affinity binding to the 14-3-3 protein YWHAG; this interaction may influence the phosphorylation and dephosphorylation of other sites. Ser-19 increases the phosphorylation at Ser-40 in a hierarchical manner, leading to increased activity.

Its subcellular location is the cytoplasm. It is found in the perinuclear region. The protein localises to the nucleus. The protein resides in the cell projection. It localises to the axon. Its subcellular location is the cytoplasmic vesicle. It is found in the secretory vesicle. The protein localises to the synaptic vesicle. It carries out the reaction (6R)-L-erythro-5,6,7,8-tetrahydrobiopterin + L-tyrosine + O2 = (4aS,6R)-4a-hydroxy-L-erythro-5,6,7,8-tetrahydrobiopterin + L-dopa. It participates in catecholamine biosynthesis; dopamine biosynthesis; dopamine from L-tyrosine: step 1/2. Inhibited in feedback fashion by the catecholamine neurotransmitters, especially by dopamine in competition with tetrahydrobiopterin. Phosphorylation of several Ser/Thr residues in the N-terminus regulates the catalytic activity. Ser-31 and Ser-40 are readily phosphorylated to activate the catalytic activity. A Cysteine modification induced by N-ethylmaleimide (NEM), inhibits tyrosine 3-monooxygenase activity through the modification of the Cys-170. Catalyzes the conversion of L-tyrosine to L-dihydroxyphenylalanine (L-Dopa), the rate-limiting step in the biosynthesis of catecholamines, dopamine, noradrenaline, and adrenaline. Uses tetrahydrobiopterin and molecular oxygen to convert tyrosine to L-Dopa. In addition to tyrosine, is able to catalyze the hydroxylation of phenylalanine and tryptophan with lower specificity. Positively regulates the regression of retinal hyaloid vessels during postnatal development. The sequence is that of Tyrosine 3-monooxygenase (TH) from Bos taurus (Bovine).